The chain runs to 817 residues: Disks large homolog 3 (817 aa).

N-acetylmethionine is present on residues M1 and H2. The interval 33-101 is disordered; that stretch reads WQVPDPYGPG…GKSTPKLNGS (69 aa). Residues 40-53 show a composition bias toward gly residues; it reads GPGGGNGASAGYGG. Polar residues predominate over residues 57 to 69; it reads QTLPSQAGATPTP. 3 PDZ domains span residues 130–217, 226–311, and 379–465; these read EEIV…VRRR, EVNL…KVAK, and DFTR…VAQY. Position 139 is a phosphoserine (S139). One can recognise an SH3 domain in the interval 501–571; the sequence is KRSLYVRALF…PSKKRVEKKE (71 aa). A Guanylate kinase-like domain is found at 627–802; that stretch reads ARPVIILGPM…IYNKIKQIIE (176 aa). Y673 bears the Phosphotyrosine mark.

It belongs to the MAGUK family. Interacts through its PDZ domains with NETO1, GRIN2B and SYNGAP1. Interacts through its guanylate kinase-like domain with DLGAP1, DLGAP2, DLGAP3 and DLGAP4. Interacts with FLTP/C1orf192. Interacts through its PDZ domains with APC. Interacts through its first two PDZ domains with ERBB4. Interacts through its third PDZ domain with NLGN1, and probably with NLGN2 and NLGN3. Interacts with FRMPD4 (via C-terminus). Interacts with LRFN1, LRFN2 and LRFN4. Interacts with DGKI (via PDZ-binding motif).

Functionally, required for learning most likely through its role in synaptic plasticity following NMDA receptor signaling. The sequence is that of Disks large homolog 3 (DLG3) from Homo sapiens (Human).